Here is a 196-residue protein sequence, read N- to C-terminus: Large ribosomal subunit protein eL15 (196 aa).

2 disordered regions span residues 72-93 and 163-196; these read SARK…TRIT and GLTG…GKGK.

The protein belongs to the eukaryotic ribosomal protein eL15 family. As to quaternary structure, part of the 50S ribosomal subunit. Interacts with protein L7Ae and weakly with L44e.

The protein is Large ribosomal subunit protein eL15 (rpl15e) of Haloarcula marismortui (strain ATCC 43049 / DSM 3752 / JCM 8966 / VKM B-1809) (Halobacterium marismortui).